A 794-amino-acid chain; its full sequence is Signal transducer and activator of transcription 5A (794 aa).

Tyrosine 90 is subject to Phosphotyrosine. Serine 129 carries the phosphoserine modification. Residues 589 to 686 (WNDGAILGFV…EVFSKYYTPV (98 aa)) enclose the SH2 domain. Position 682 is a phosphotyrosine (tyrosine 682). Position 694 is a phosphotyrosine; by JAK2 (tyrosine 694). The interval 765–794 (EELLRRPNGQSGPLSPPPAGLFTPARGSLS) is disordered.

It belongs to the transcription factor STAT family. As to quaternary structure, forms a homodimer or a heterodimer with a related family member. Binds NR3C1. Interacts with NCOA1 and SOCS7. Interacts with ERBB4. Interacts with EBF4. Interacts with CD69. ISGylated. In terms of processing, tyrosine phosphorylated in response to KITLG/SCF, IL2, IL3, IL7, IL15, CSF2/GMCSF, GH1, PRL, EPO and THPO. Activated KIT promotes phosphorylation on tyrosine residues and subsequent translocation to the nucleus. Tyrosine phosphorylated in response to constitutively activated FGFR1, FGFR2, FGFR3 and FGFR4. Tyrosine phosphorylation is required for DNA-binding activity and dimerization. Serine phosphorylation is also required for maximal transcriptional activity. Tyrosine phosphorylated in response to signaling via activated FLT3; wild-type FLT3 results in much weaker phosphorylation than constitutively activated mutant FLT3. Alternatively, can be phosphorylated by JAK2 at Tyr-694. In terms of tissue distribution, found in mammary gland and, in lesser extent, in ovary, thymus, spleen, kidney, lung, muscle and adrenal gland.

Its subcellular location is the cytoplasm. The protein resides in the nucleus. Carries out a dual function: signal transduction and activation of transcription. Mediates cellular responses to the cytokine KITLG/SCF and other growth factors. May mediate cellular responses to activated FGFR1, FGFR2, FGFR3 and FGFR4. Binds to the GAS element and activates PRL-induced transcription. Regulates the expression of milk proteins during lactation. This chain is Signal transducer and activator of transcription 5A (STAT5A), found in Ovis aries (Sheep).